Consider the following 359-residue polypeptide: Ribosomal RNA small subunit methyltransferase H (359 aa).

Residues 39–41 (AGH), Asp58, Phe87, Asp108, and Gln115 contribute to the S-adenosyl-L-methionine site. A disordered region spans residues 339–359 (IQGSASPGRAKNTARIRTRRG). Over residues 350-359 (NTARIRTRRG) the composition is skewed to basic residues.

The protein belongs to the methyltransferase superfamily. RsmH family.

It localises to the cytoplasm. It catalyses the reaction cytidine(1402) in 16S rRNA + S-adenosyl-L-methionine = N(4)-methylcytidine(1402) in 16S rRNA + S-adenosyl-L-homocysteine + H(+). In terms of biological role, specifically methylates the N4 position of cytidine in position 1402 (C1402) of 16S rRNA. The chain is Ribosomal RNA small subunit methyltransferase H from Bifidobacterium longum (strain DJO10A).